A 417-amino-acid polypeptide reads, in one-letter code: Protein FAM181B (417 aa).

The interval 104 to 147 (CSGLMGTAPPRPASPSAADAPAKRPPGAPTVATPAHCKAAPRRE) is disordered.

It belongs to the FAM181 family.

The chain is Protein FAM181B (Fam181b) from Mus musculus (Mouse).